The chain runs to 64 residues: Large ribosomal subunit protein bL35 (64 aa).

Basic residues predominate over residues 1–14; sequence MKNKTHKGTAKRVK. Residues 1-30 form a disordered region; sequence MKNKTHKGTAKRVKVTGSGKLVREQANRRH. The segment covering 21–30 has biased composition (basic and acidic residues); that stretch reads LVREQANRRH.

Belongs to the bacterial ribosomal protein bL35 family.

The protein is Large ribosomal subunit protein bL35 of Corynebacterium efficiens (strain DSM 44549 / YS-314 / AJ 12310 / JCM 11189 / NBRC 100395).